The primary structure comprises 309 residues: tRNA-cytidine(32) 2-sulfurtransferase (309 aa).

The PP-loop motif motif lies at 47-52 (SGGKDS). The [4Fe-4S] cluster site is built by C122, C125, and C213.

Belongs to the TtcA family. Homodimer. Mg(2+) serves as cofactor. It depends on [4Fe-4S] cluster as a cofactor.

The protein resides in the cytoplasm. The catalysed reaction is cytidine(32) in tRNA + S-sulfanyl-L-cysteinyl-[cysteine desulfurase] + AH2 + ATP = 2-thiocytidine(32) in tRNA + L-cysteinyl-[cysteine desulfurase] + A + AMP + diphosphate + H(+). It functions in the pathway tRNA modification. Functionally, catalyzes the ATP-dependent 2-thiolation of cytidine in position 32 of tRNA, to form 2-thiocytidine (s(2)C32). The sulfur atoms are provided by the cysteine/cysteine desulfurase (IscS) system. This is tRNA-cytidine(32) 2-sulfurtransferase from Erwinia tasmaniensis (strain DSM 17950 / CFBP 7177 / CIP 109463 / NCPPB 4357 / Et1/99).